Reading from the N-terminus, the 258-residue chain is Ubiquinone/menaquinone biosynthesis C-methyltransferase UbiE (258 aa).

S-adenosyl-L-methionine contacts are provided by residues Thr81, Asp102, and 130-131 (NA).

It belongs to the class I-like SAM-binding methyltransferase superfamily. MenG/UbiE family.

It carries out the reaction a 2-demethylmenaquinol + S-adenosyl-L-methionine = a menaquinol + S-adenosyl-L-homocysteine + H(+). It catalyses the reaction a 2-methoxy-6-(all-trans-polyprenyl)benzene-1,4-diol + S-adenosyl-L-methionine = a 5-methoxy-2-methyl-3-(all-trans-polyprenyl)benzene-1,4-diol + S-adenosyl-L-homocysteine + H(+). It functions in the pathway quinol/quinone metabolism; menaquinone biosynthesis; menaquinol from 1,4-dihydroxy-2-naphthoate: step 2/2. The protein operates within cofactor biosynthesis; ubiquinone biosynthesis. Methyltransferase required for the conversion of demethylmenaquinol (DMKH2) to menaquinol (MKH2) and the conversion of 2-polyprenyl-6-methoxy-1,4-benzoquinol (DDMQH2) to 2-polyprenyl-3-methyl-6-methoxy-1,4-benzoquinol (DMQH2). In Rhizobium meliloti (strain 1021) (Ensifer meliloti), this protein is Ubiquinone/menaquinone biosynthesis C-methyltransferase UbiE.